Here is a 282-residue protein sequence, read N- to C-terminus: Ribosomal RNA small subunit methyltransferase A (282 aa).

Asparagine 28, leucine 30, glycine 55, glutamate 77, aspartate 103, and asparagine 123 together coordinate S-adenosyl-L-methionine.

The protein belongs to the class I-like SAM-binding methyltransferase superfamily. rRNA adenine N(6)-methyltransferase family. RsmA subfamily.

It localises to the cytoplasm. It carries out the reaction adenosine(1518)/adenosine(1519) in 16S rRNA + 4 S-adenosyl-L-methionine = N(6)-dimethyladenosine(1518)/N(6)-dimethyladenosine(1519) in 16S rRNA + 4 S-adenosyl-L-homocysteine + 4 H(+). Functionally, specifically dimethylates two adjacent adenosines (A1518 and A1519) in the loop of a conserved hairpin near the 3'-end of 16S rRNA in the 30S particle. May play a critical role in biogenesis of 30S subunits. This is Ribosomal RNA small subunit methyltransferase A from Afipia carboxidovorans (strain ATCC 49405 / DSM 1227 / KCTC 32145 / OM5) (Oligotropha carboxidovorans).